The chain runs to 441 residues: DNA double-strand break repair protein Mre11 (441 aa).

Mn(2+)-binding residues include Asp-9, His-11, Asp-50, and Asn-85. The active-site Proton donor is His-86. Mn(2+)-binding residues include His-150, Asp-181, and His-183. Positions Glu-360–Ala-441 are disordered. Acidic residues-rich tracts occupy residues Ala-379–Ala-403 and Thr-411–Thr-425.

It belongs to the MRE11/RAD32 family. In terms of assembly, homodimer. Forms a heterotetramer composed of two Mre11 subunits and two Rad50 subunits. Mn(2+) is required as a cofactor.

Its activity is regulated as follows. Nuclease activity is regulated by Rad50. In terms of biological role, part of the Rad50/Mre11 complex, which is involved in the early steps of DNA double-strand break (DSB) repair. Mre11 binds to DSB ends and has both double-stranded 3'-5' exonuclease activity and single-stranded endonuclease activity. In polyploid organisms, the Rad50/Mre11 complex appears to restrain the repair of double-strand breaks by homologous recombination, allowing another pathway to act as the primary mode of repair. The protein is DNA double-strand break repair protein Mre11 of Haloferax volcanii (strain ATCC 29605 / DSM 3757 / JCM 8879 / NBRC 14742 / NCIMB 2012 / VKM B-1768 / DS2) (Halobacterium volcanii).